A 58-amino-acid chain; its full sequence is Large ribosomal subunit protein eL37 (58 aa).

Zn(2+)-binding residues include cysteine 20, cysteine 23, cysteine 35, and cysteine 38. A C4-type zinc finger spans residues 20–38 (CRRCGEKSYHVKKERCSSC). The tract at residues 39–58 (GFGDSASRRGYAWQSKSGDN) is disordered.

This sequence belongs to the eukaryotic ribosomal protein eL37 family. Zn(2+) serves as cofactor.

In terms of biological role, binds to the 23S rRNA. The chain is Large ribosomal subunit protein eL37 from Halorubrum lacusprofundi (strain ATCC 49239 / DSM 5036 / JCM 8891 / ACAM 34).